The chain runs to 432 residues: Glutamine synthetase, chloroplastic (432 aa).

In terms of domain architecture, GS beta-grasp spans 79 to 159; sequence IIAEYIWIGG…VICDTYTPQG (81 aa). The GS catalytic domain maps to 166–432; sequence KRHKAAQIFS…LAAQKLSLNV (267 aa).

It belongs to the glutamine synthetase family. In terms of assembly, homooctamer.

Its subcellular location is the plastid. The protein resides in the chloroplast. It carries out the reaction L-glutamate + NH4(+) + ATP = L-glutamine + ADP + phosphate + H(+). Its function is as follows. The light-modulated chloroplast enzyme, encoded by a nuclear gene and expressed primarily in leaves, is responsible for the reassimilation of the ammonia generated by photorespiration. The chain is Glutamine synthetase, chloroplastic (GLN2) from Daucus carota (Wild carrot).